We begin with the raw amino-acid sequence, 44 residues long: Mu-conotoxin-like Cal 12.1.3b (44 aa).

4 cysteine pairs are disulfide-bonded: C3–C16, C11–C28, C18–C33, and C27–C38. P23 carries the post-translational modification 4-hydroxyproline. 2 positions are modified to 6'-bromotryptophan: W36 and W37. P39 carries the post-translational modification 4-hydroxyproline. W43 is subject to 6'-bromotryptophan.

Expressed by the venom duct.

It is found in the secreted. Its function is as follows. Mu-conotoxins block voltage-gated sodium channels. This toxin reversibly blocks voltage-gated sodium channel in cephalopods, with no alteration in the voltage dependence of sodium conductance or on the kinetics of inactivation. This Californiconus californicus (California cone) protein is Mu-conotoxin-like Cal 12.1.3b.